Consider the following 858-residue polypeptide: Toll-like receptor 5 (858 aa).

The N-terminal stretch at 1 to 20 (MGDHLDLLLGVVLMAGPVFG) is a signal peptide. The Extracellular segment spans residues 21–639 (IPSCSFDGRI…DEEEVLKSLK (619 aa)). Residues Asn-37 and Asn-46 are each glycosylated (N-linked (GlcNAc...) asparagine). 9 LRR repeats span residues 45–68 (LNTTERLLLSFNYIRTVTASSFPF), 71–93 (QLQLLELGSQYTPLTIDKEAFRN), 95–117 (PNLRILDLGSSKIYFLHPDAFQG), 120–143 (HLFELRLYFCGLSDAVLKDGYFRN), 146–166 (ALTRLDLSKNQIRSLYLHPSF), 171–192 (SLKSIDFSSNQIFLVCEHELEP), 197–211 (TLSFFSLAANSLYSR), 214–229 (VDWGKCMNPFRNMVLE), and 234–235 (SG). The N-linked (GlcNAc...) asparagine glycan is linked to Asn-245. 11 LRR repeats span residues 260–284 (LAHHIMGAGFGFHNIKDPDQNTFAG), 289–301 (SVRHLDLSHGFVF), 313–334 (DLKVLNLAYNKINKIADEAFYG), 337–355 (NLQVLNLSYNLLGELYSSN), 385–401 (KLQTLDLRDNALTTIHF), 412–431 (GNKLVTLPKINLTANLIHLS), 449–470 (HLQILILNQNRFSSCSGDQTPS), 474–495 (SLEQLFLGENMLQLAWETELCW), 503–524 (HLQVLYLNHNYLNSLPPGVFSH), 527–546 (ALRGLSLNSNRLTVLSHNDL), and 549–567 (NLEILDISRNQLLAPNPDV). Asn-342 is a glycosylation site (N-linked (GlcNAc...) asparagine). N-linked (GlcNAc...) asparagine glycosylation is present at Asn-422. The LRRCT domain maps to 579-631 (NKFICECELSTFINWLNHTNVTIAGPPADIYCVYPDSFSGVSLFSLSTEGCDE). Intrachain disulfides connect Cys-583–Cys-610 and Cys-585–Cys-629. N-linked (GlcNAc...) asparagine glycans are attached at residues Asn-595 and Asn-598. Residues 640–660 (FSLFIVCTVTLTLFLMTILTV) form a helical membrane-spanning segment. Over 661–858 (TKFRGFCFIC…IPLQTVATIS (198 aa)) the chain is Cytoplasmic. In terms of domain architecture, TIR spans 691 to 836 (YKYDAYLCFS…WFLHKLSQQI (146 aa)). Residue Tyr-798 is modified to Phosphotyrosine. A Phosphoserine; by PKD/PRKD1 modification is found at Ser-805.

The protein belongs to the Toll-like receptor family. Homodimer. Interacts with MYD88 (via TIR domain). Interacts with TICAM1 (via TIR domain). Interacts with UNC93B1; this interaction is essential for proper TLR5 localization to the plasma membrane. Phosphorylated at Ser-805 by PKD/PRKD1; phosphorylation induces the production of inflammatory cytokines. In terms of processing, phosphorylated at Tyr-798 upon flagellin binding; required for signaling. Highly expressed on the basolateral surface of intestinal epithelia. Expressed also in other cells such as lung epithelial cells.

Its subcellular location is the cell membrane. In terms of biological role, pattern recognition receptor (PRR) located on the cell surface that participates in the activation of innate immunity and inflammatory response. Recognizes small molecular motifs named pathogen-associated molecular pattern (PAMPs) expressed by pathogens and microbe-associated molecular patterns (MAMPs) usually expressed by resident microbiota. Upon ligand binding such as bacterial flagellins, recruits intracellular adapter proteins MYD88 and TRIF leading to NF-kappa-B activation, cytokine secretion and induction of the inflammatory response. Plays thereby an important role in the relationship between the intestinal epithelium and enteric microbes and contributes to the gut microbiota composition throughout life. The polypeptide is Toll-like receptor 5 (TLR5) (Homo sapiens (Human)).